A 304-amino-acid chain; its full sequence is Acetaldehyde dehydrogenase 2 (304 aa).

C131 functions as the Acyl-thioester intermediate in the catalytic mechanism. NAD(+) is bound by residues 162 to 170 and N273; that span reads SAGPGTRKN.

It belongs to the acetaldehyde dehydrogenase family.

The catalysed reaction is acetaldehyde + NAD(+) + CoA = acetyl-CoA + NADH + H(+). The sequence is that of Acetaldehyde dehydrogenase 2 from Dechloromonas aromatica (strain RCB).